The primary structure comprises 354 residues: Uroporphyrinogen decarboxylase (354 aa).

Residues 27 to 31 (RQAGR), aspartate 77, tyrosine 154, threonine 209, and histidine 327 contribute to the substrate site.

This sequence belongs to the uroporphyrinogen decarboxylase family. In terms of assembly, homodimer.

It is found in the cytoplasm. The catalysed reaction is uroporphyrinogen III + 4 H(+) = coproporphyrinogen III + 4 CO2. Its pathway is porphyrin-containing compound metabolism; protoporphyrin-IX biosynthesis; coproporphyrinogen-III from 5-aminolevulinate: step 4/4. Catalyzes the decarboxylation of four acetate groups of uroporphyrinogen-III to yield coproporphyrinogen-III. The protein is Uroporphyrinogen decarboxylase of Escherichia coli (strain UTI89 / UPEC).